The sequence spans 120 residues: Large ribosomal subunit protein uL18 (120 aa).

This sequence belongs to the universal ribosomal protein uL18 family. As to quaternary structure, part of the 50S ribosomal subunit; part of the 5S rRNA/L5/L18/L25 subcomplex. Contacts the 5S and 23S rRNAs.

Functionally, this is one of the proteins that bind and probably mediate the attachment of the 5S RNA into the large ribosomal subunit, where it forms part of the central protuberance. The polypeptide is Large ribosomal subunit protein uL18 (Treponema denticola (strain ATCC 35405 / DSM 14222 / CIP 103919 / JCM 8153 / KCTC 15104)).